The sequence spans 163 residues: Nucleotide-binding protein HSM_1099 (163 aa).

This sequence belongs to the YajQ family.

Its function is as follows. Nucleotide-binding protein. The chain is Nucleotide-binding protein HSM_1099 from Histophilus somni (strain 2336) (Haemophilus somnus).